Reading from the N-terminus, the 1221-residue chain is Coatomer subunit alpha (1221 aa).

WD repeat units follow at residues 7 to 46, 49 to 88, 91 to 130, 133 to 172, 202 to 241, 243 to 282, 285 to 323, 358 to 399, and 528 to 567; these read TKAS…LLEK, EHEG…CLFT, GHKD…CIAE, GHNH…KKMT, GHDR…VDTF, GHYN…TVHM, RDHD…PLFV, PSNN…SNTV, and WDDN…TGVK. The tract at residues 820-885 is disordered; that stretch reads GVEQSTSTPT…DDGGWERDDL (66 aa). A compositionally biased stretch (low complexity) spans 844–857; the sequence is SQQQSSQQQQQQQQ. One copy of the WD 10 repeat lies at 910-953; sequence PQPGPSFSMIWARNSQFAVDHIAAGSFESAMNILNSQIGAVNFD.

As to quaternary structure, oligomeric complex that consists of at least the alpha, beta, beta', gamma, delta, epsilon and zeta subunits.

Its subcellular location is the cytoplasm. The protein localises to the golgi apparatus membrane. In terms of biological role, the coatomer is a cytosolic protein complex that binds to dilysine motifs and reversibly associates with Golgi non-clathrin-coated vesicles, which further mediate biosynthetic protein transport from the ER, via the Golgi up to the trans Golgi network. Coatomer complex is required for budding from Golgi membranes, and is essential for the retrograde Golgi-to-ER transport of dilysine-tagged proteins. In Dictyostelium discoideum (Social amoeba), this protein is Coatomer subunit alpha (copa).